The chain runs to 1331 residues: Receptor-type adenylate cyclase B (1331 aa).

The Cytoplasmic portion of the chain corresponds to 1–33; the sequence is MYADATHPRRACWCGAGGVSGCVRQRHAYRCSR. Residues 34 to 54 traverse the membrane as a helical segment; it reads LLAGVLLIVGALTLTLAVSTV. Residues 55–898 are Extracellular-facing; sequence PAAWAAGAVA…SHALTPAQRG (844 aa). N-linked (GlcNAc...) asparagine glycosylation is found at N255, N429, N558, N574, and N657. Residues 899–919 traverse the membrane as a helical segment; it reads GAIAGIALLTVILLAVAGLAL. The Cytoplasmic segment spans residues 920 to 1331; sequence YCCMDNRNND…PTVCNVRGAH (412 aa). In terms of domain architecture, Guanylate cyclase spans 940–1094; that stretch reads TLLFTDIESS…DTSNMAARTE (155 aa). Residues D945 and D988 each contribute to the Mg(2+) site.

The protein belongs to the adenylyl cyclase class-3 family. The cofactor is Mg(2+).

It localises to the membrane. The enzyme catalyses ATP = 3',5'-cyclic AMP + diphosphate. In terms of biological role, could act as a receptor for an unknown ligand. This is Receptor-type adenylate cyclase B (RAC-B) from Leishmania donovani.